A 266-amino-acid chain; its full sequence is Enterotoxin type C-3 (266 aa).

A signal peptide spans 1-27 (MYKRLFISRVILIFALILVISTPNVLA). 2 residues coordinate Zn(2+): aspartate 36 and aspartate 110. Cysteine 120 and cysteine 137 form a disulfide bridge. Zn(2+) contacts are provided by histidine 145 and histidine 149.

It belongs to the staphylococcal/streptococcal toxin family. Interacts with MHC class II molecules composed of alpha/HLA-DRA and beta/HLA-DRB1 chains. Interacts with host T-cell receptor/TCR beta variable chain TRBV8-2.

The protein localises to the secreted. Its function is as follows. Staphylococcal enterotoxin that activates the host immune system by binding as unprocessed molecules to major histocompatibility (MHC) complex class II and T-cell receptor (TCR) molecules. In turn, this ternary complex activates a large number of T-lymphocytes initiating a systemic release of pro-inflammatory cytokines. Also causes the intoxication staphylococcal food poisoning syndrome. This is Enterotoxin type C-3 (entC3) from Staphylococcus aureus.